A 151-amino-acid polypeptide reads, in one-letter code: Putative pre-16S rRNA nuclease (151 aa).

Belongs to the YqgF nuclease family.

The protein resides in the cytoplasm. Could be a nuclease involved in processing of the 5'-end of pre-16S rRNA. The protein is Putative pre-16S rRNA nuclease of Paraburkholderia phymatum (strain DSM 17167 / CIP 108236 / LMG 21445 / STM815) (Burkholderia phymatum).